The chain runs to 286 residues: Polyamine aminopropyltransferase (286 aa).

The region spanning 5-238 (PLWHETLHDH…GIMTFAWASD (234 aa)) is the PABS domain. Q33 is an S-methyl-5'-thioadenosine binding site. 2 residues coordinate spermidine: H64 and D88. S-methyl-5'-thioadenosine is bound by residues E108 and 140–141 (DG). The active-site Proton acceptor is the D158. Residue 158–161 (DCTD) coordinates spermidine. Residue P165 coordinates S-methyl-5'-thioadenosine.

Belongs to the spermidine/spermine synthase family. As to quaternary structure, homodimer or homotetramer.

Its subcellular location is the cytoplasm. It catalyses the reaction S-adenosyl 3-(methylsulfanyl)propylamine + putrescine = S-methyl-5'-thioadenosine + spermidine + H(+). Its pathway is amine and polyamine biosynthesis; spermidine biosynthesis; spermidine from putrescine: step 1/1. Catalyzes the irreversible transfer of a propylamine group from the amino donor S-adenosylmethioninamine (decarboxy-AdoMet) to putrescine (1,4-diaminobutane) to yield spermidine. This Klebsiella pneumoniae (strain 342) protein is Polyamine aminopropyltransferase.